The primary structure comprises 466 residues: Cysteine--tRNA ligase (466 aa).

Cys-28 serves as a coordination point for Zn(2+). Positions 30–40 match the 'HIGH' region motif; that stretch reads PTVYNFFHIGN. Residues Cys-208, His-233, and Glu-237 each contribute to the Zn(2+) site. Residues 265-269 carry the 'KMSKS' region motif; sequence KMSKS. Lys-268 provides a ligand contact to ATP.

Belongs to the class-I aminoacyl-tRNA synthetase family. Monomer. Zn(2+) is required as a cofactor.

The protein resides in the cytoplasm. It carries out the reaction tRNA(Cys) + L-cysteine + ATP = L-cysteinyl-tRNA(Cys) + AMP + diphosphate. This chain is Cysteine--tRNA ligase, found in Clostridium perfringens (strain 13 / Type A).